The following is a 448-amino-acid chain: Alpha-2B adrenergic receptor (448 aa).

Residues 1–12 are Extracellular-facing; the sequence is MDHQEPYSVQAT. A helical transmembrane segment spans residues 13 to 38; it reads AAIAAVITFLILFTIFGNALVILAVL. At 39 to 49 the chain is on the cytoplasmic side; the sequence is TSRSLPAPQNL. The helical transmembrane segment at 50–75 threads the bilayer; the sequence is FLVSLAAADILVATLIIPFSLANELL. Topologically, residues 76-85 are extracellular; that stretch reads GYWYFWRTWC. Cys-85 and Cys-163 form a disulfide bridge. A helical transmembrane segment spans residues 86 to 108; the sequence is EVYLALDVLFCTSSIVHLCAISL. Residues 109–130 lie on the Cytoplasmic side of the membrane; sequence DRYWAVSRALEYNSKRTPRRIK. A helical membrane pass occupies residues 131–153; the sequence is CIILTVWLIAAVISLPPLIYKGD. The Extracellular segment spans residues 154–168; sequence QGPSPRGPQCKINQE. Residues 169–192 form a helical membrane-spanning segment; the sequence is AWYILASSIGSFFAPCLIMILVYL. The Cytoplasmic portion of the chain corresponds to 193 to 370; sequence RIYLIAKRSH…MTREKRFTFV (178 aa). Residues 203-326 are disordered; that stretch reads RRGPRAKGGP…PASMCSPSLQ (124 aa). Positions 293–309 are enriched in acidic residues; the sequence is AEEEAEEEEEEEGDECE. Residues 371 to 394 form a helical membrane-spanning segment; it reads LAVVIGVFVLCWFPFFFTYSLGAI. Residues 395-403 lie on the Extracellular side of the membrane; that stretch reads CPQHCKVPH. A helical membrane pass occupies residues 404-427; sequence GLFQFFFWIGYCNSSLNPVIYTIF. Over 428–448 the chain is Cytoplasmic; sequence NQDFRRAFRRILCRQWTQTAW. Residue Cys-440 is the site of S-palmitoyl cysteine attachment.

This sequence belongs to the G-protein coupled receptor 1 family. Adrenergic receptor subfamily. ADRA2B sub-subfamily. Interacts with RAB26. Interacts with PPP1R9B.

It localises to the cell membrane. Its function is as follows. Alpha-2 adrenergic receptors mediate the catecholamine-induced inhibition of adenylate cyclase through the action of G proteins. This chain is Alpha-2B adrenergic receptor (ADRA2B), found in Cavia porcellus (Guinea pig).